We begin with the raw amino-acid sequence, 200 residues long: Serotonin N-acetyltransferase 2, chloroplastic (200 aa).

Residues 1 to 41 (MQMQAARPRVGVRPRGGIRPFPLPTLSFNNNSNRSACACAC) constitute a chloroplast transit peptide. In terms of domain architecture, N-acetyltransferase spans 55–195 (FAVRRSSTGL…MAFYRSRQQI (141 aa)).

The protein resides in the cytoplasm. The protein localises to the plastid. Its subcellular location is the chloroplast. It catalyses the reaction serotonin + acetyl-CoA = N-acetylserotonin + CoA + H(+). The enzyme catalyses tyramine + acetyl-CoA = N-acetyltyramine + CoA + H(+). It carries out the reaction tryptamine + acetyl-CoA = N-acetyltryptamine + CoA + H(+). The catalysed reaction is 5-methoxytryptamine + acetyl-CoA = melatonin + CoA + H(+). It functions in the pathway aromatic compound metabolism; melatonin biosynthesis; melatonin from serotonin: step 1/2. Its function is as follows. Catalyzes the N-acetylation of serotonin into N-acetylserotonin, the penultimate step in the synthesis of melatonin. Catalyzes in vitro the N-acetylation of tryptamine to produce N-acetyltryptamine, 5-methoxytryptamine to produce melatonin and tyramine to produce N-acetyltyramine. In Oryza sativa subsp. japonica (Rice), this protein is Serotonin N-acetyltransferase 2, chloroplastic.